The following is a 18562-amino-acid chain: Titin homolog (18562 aa).

The Ig-like 1 domain occupies 90–176 (PKFIQVIKAY…GVSTSYGYIT (87 aa)). Positions 384–404 (RFHPQPPKPPRAGTSRRFLPE) are disordered. Ig-like domains follow at residues 406–493 (PKFV…TQVT), 821–913 (PKIV…AFIN), 943–1038 (PKFI…LTIS), and 1135–1225 (PRFE…LTVD). Residues cysteine 842 and cysteine 897 are joined by a disulfide bond. The interval 1336 to 1360 (LPPVQKSMSVQEEKASSQRTPSPMN) is disordered. The Ig-like 6 domain occupies 1679–1762 (PKFLRKLVNC…ASNVAGTTFS (84 aa)). A disulfide bridge links cysteine 1700 with cysteine 1751. Coiled coils occupy residues 1766 to 1786 (LKLS…SEIK), 2011 to 2038 (QSLD…ERTS), and 2065 to 2085 (ISDQ…ALQE). Residues 2155–2177 (RKGSDKDKRKATRIKRVPSAHSA) are disordered. The segment covering 2163-2172 (RKATRIKRVP) has biased composition (basic residues). Residues 2205-2231 (LKQNEEAKEIQELFVKIEKEINTIAEL) adopt a coiled-coil conformation. Disordered stretches follow at residues 2298 to 2459 (IIGI…TADA) and 2614 to 2637 (KSSL…EVTA). A compositionally biased stretch (low complexity) spans 2309–2323 (RRPSSTPRGSTRSSN). The segment covering 2324-2341 (LTTSQDSQATTKMTVSSE) has biased composition (polar residues). Residues 2606–2630 (LMQTLASEKSSLKAAEEDEKEGEEE) adopt a coiled-coil conformation. A compositionally biased stretch (acidic residues) spans 2621–2636 (EEDEKEGEEEGEEEVT). 2 consecutive Ig-like domains span residues 3095 to 3177 (KEVM…SGLY) and 3179 to 3264 (TERS…SFVS). The interval 3362-3692 (EVPKVAEPSE…NAEAQKVVDS (331 aa)) is disordered. Positions 3655–3665 (SEEETPLEETN) are enriched in acidic residues. 3 consecutive Ig-like domains span residues 3789–3878 (PVFT…CEIV), 3897–3985 (PHFV…CTID), and 4038–4125 (PPYF…CVLT). Intrachain disulfides connect cysteine 3919/cysteine 3969 and cysteine 4059/cysteine 4109. Disordered regions lie at residues 4553–4599 (QSRE…SAPT), 4634–4699 (TVEP…EIVE), 4750–4814 (GSTA…TSEV), 4826–4855 (PVPE…EVQP), 4912–4931 (STAA…VESK), 4950–4969 (PETS…PVES), 4989–5216 (PETS…EILE), 5267–5294 (GSTA…EVEP), 5306–5325 (PETS…SVES), 5345–5372 (PETS…EVEP), 5428–6101 (GSTA…VEPT), 6127–6157 (VQVP…EVQP), 6214–6900 (STAA…ETSE), and 6930–8453 (APVE…DDKL). Residues 4555–4577 (RELDNTERNFTVNKEKDESKKPS) are compositionally biased toward basic and acidic residues. 56 PVET repeats span residues 4599 to 4626 (TVEK…KDVP), 4627 to 4665 (VPET…KDVP), 4666 to 4704 (VPET…KDVT), 4755 to 4787 (PAQE…KDVP), 4788 to 4826 (VPET…KDVP), 4827 to 4865 (VPET…KDVT), 4917 to 4948 (AQEP…KDVP), 4949 to 4987 (VPET…KDVP), 4988 to 5026 (VPET…KDVP), 5027 to 5065 (VPET…KDVP), 5066 to 5104 (VPET…KDVP), 5105 to 5143 (VPET…KDVP), 5144 to 5182 (VPET…KVVP), 5183 to 5221 (VPET…KDVT), 5273 to 5304 (AQEP…KDVP), 5305 to 5343 (VPET…KDVP), 5344 to 5382 (VPET…KDVT), 5434 to 5465 (AQEP…KDVP), 5466 to 5504 (VPET…KDVP), 5505 to 5543 (VPET…KVVP), 5544 to 5582 (VPET…KDVP), 5583 to 5621 (VPET…KDVP), 5622 to 5660 (VPET…KDVS), 5661 to 5699 (VPET…KDVS), 5700 to 5738 (VPET…KDVP), 5739 to 5777 (VPET…KDVQ), 5778 to 5816 (VPET…KDVP), 5817 to 5855 (VPET…KDVP), 5856 to 5894 (VPET…KDVS), 5895 to 5933 (VPET…KDVP), 5934 to 5972 (VPET…KDVQ), 5973 to 6011 (VPET…KDVP), 6012 to 6050 (VPET…KDVQ), 6051 to 6089 (VPET…KDVS), 6090 to 6128 (VPET…KDVQ), 6129 to 6167 (VPET…KDVT), 6219 to 6250 (AHEP…KDVP), 6251 to 6289 (VPET…KDLP), 6290 to 6328 (VPET…KDVP), 6329 to 6367 (VPET…KDVP), 6368 to 6406 (VPET…KDVP), 6407 to 6445 (VPET…KDVS), 6446 to 6484 (VPET…KDVS), 6485 to 6523 (VPET…KDVP), 6524 to 6562 (VPET…KDVQ), 6563 to 6601 (VPET…KDVP), 6602 to 6640 (VPET…KDVP), 6641 to 6679 (VPET…KDVQ), 6680 to 6718 (VPET…KDVP), 6719 to 6757 (VPET…KDVA), 6758 to 6796 (VPET…KDVP), 6797 to 6835 (VPET…KDVP), 6836 to 6874 (VPET…KDVP), 6875 to 6913 (VPET…KDVP), 6914 to 6952 (VPEA…KDVP), and 6953 to 6991 (VPEA…KLKK). 2 stretches are compositionally biased toward basic and acidic residues: residues 4638-4651 (TVEK…KETS) and 4677-4691 (TVEK…EKSE). Over residues 4960 to 4969 (TVEKLKPVES) the composition is skewed to basic and acidic residues. The span at 5038–5051 (TVEKLKPVESKETS) shows a compositional bias: basic and acidic residues. Basic and acidic residues-rich tracts occupy residues 5116–5129 (TVEK…KETS) and 5155–5168 (TVEK…KETS). The stretch at 5212 to 5235 (AEILEQKDVTCEEEIKELLTEVEV) forms a coiled coil. Positions 5316–5325 (TVEKLKSVES) are enriched in basic and acidic residues. Composition is skewed to basic and acidic residues over residues 5477–5490 (TVEK…KETS) and 5516–5529 (TVEK…KETS). 6 stretches are compositionally biased toward basic and acidic residues: residues 6690–6704 (PTKE…KETS), 6729–6743 (PTKE…KETS), 6768–6782 (PTKE…KETS), 6807–6821 (PTKE…KETS), 6846–6860 (PTKE…KETS), and 6885–6899 (PTKE…KETS). 4 stretches are compositionally biased toward basic and acidic residues: residues 6972-7606 (ESKE…DNFK), 7613-7630 (LQKE…DNFK), 7637-8062 (LQKE…DNFK), and 8069-8453 (LQKE…DDKL). Residues 6984 to 7812 (QADAKLKKEK…DKLKQETDAK (829 aa)) adopt a coiled-coil conformation. BLUE repeat units follow at residues 6992–6996 (EKDDK), 6997–7012 (HKQE…NDDK), 7013–7028 (LKQE…NDDK), 7029–7044 (LKQE…NDDK), 7045–7060 (LKQE…NDDK), 7061–7076 (LKQE…NDDK), 7077–7092 (LKQE…NDDK), 7093–7108 (LKQE…NDDK), 7109–7124 (LKQE…NDDK), 7125–7140 (LKQE…NDDK), 7141–7156 (LKQE…NDDK), 7157–7172 (LKQE…NDDK), 7173–7188 (LKQE…NDDK), 7189–7204 (LKQE…KHDK), 7205–7220 (LKQE…NDDK), 7221–7236 (LKQE…NDDK), 7237–7252 (LKQE…KDDK), 7253–7268 (LKQE…KDDK), 7269–7284 (LKQD…KDDK), 7285–7300 (LKQE…KDDK), 7301–7316 (LKHE…KDDK), 7317–7332 (LKQE…KDDR), 7333–7348 (LKKD…KDDK), 7349–7364 (LKQE…KDDK), 7365–7380 (LKHE…KDDK), 7381–7396 (LKQE…KDDK), 7397–7412 (LKQE…KDDK), 7413–7428 (LKQE…KDDK), 7429–7444 (LKQE…KDDK), 7445–7460 (LKQE…KDDK), 7461–7476 (LKQE…KDDK), 7477–7492 (LKQE…KDDK), 7493–7508 (LKQE…KDDK), 7509–7524 (LKQD…KDDK), 7525–7540 (LKQE…KDDK), 7541–7556 (LKHE…KDDK), 7557–7572 (LKQE…KDDK), 7573–7588 (LKQD…KDDK), 7589–7604 (LKHE…KDDN), 7605–7620 (FKQE…KDDK), 7621–7628 (LKQEKDDN), 7629–7644 (FKQE…KDDK), 7645–7652 (LKQEKDDK), 7653–7668 (LKQE…KDDK), 7669–7684 (LKQE…KDDK), 7685–7700 (LKQE…KDDK), 7701–7716 (LKQE…KDDK), 7717–7732 (LKQE…KDDK), 7733–7748 (LKQE…KDDK), 7749–7764 (LKQE…KDDK), 7765–7772 (LKQEKNDK), 7773–7788 (LKQE…KDDK), 7789–7804 (LKQE…KDDK), 7805–7820 (LKQE…KDDK), 7821–7836 (LKQE…KDDK), 7837–7852 (LKQE…KDDK), 7853–7868 (LKQE…KDNK), 7869–7884 (LKQE…KDNK), 7885–7900 (LKQE…KDDK), 7901–7916 (LKQE…KDDK), 7917–7932 (LKQE…KDDK), 7933–7948 (LKQE…KDDK), 7949–7964 (LKQE…KDDK), 7965–7980 (LKQE…KDDK), 7981–7996 (LKQE…KDDK), 7997–8012 (LKQE…KDDK), 8013–8028 (LKQE…KDDK), 8029–8044 (LKQE…KDDK), 8045–8060 (LKQE…KDDN), 8061–8076 (FKQE…KDDK), 8077–8084 (LKQEKDDK), 8085–8100 (LKQE…KDDK), 8101–8116 (LKQE…KDDK), 8117–8132 (LKQE…KDDK), 8133–8148 (LKQE…KDDK), 8149–8164 (LKQE…KDDK), 8165–8180 (LKQE…KDDK), 8181–8196 (LKQE…KDDK), 8197–8212 (LKQE…KDDK), 8213–8228 (LKQE…KDDK), 8229–8244 (LKQE…KDDK), 8245–8260 (LKQE…KDDK), 8261–8276 (LKQE…KDDK), 8277–8292 (LKQE…KDDK), 8293–8308 (LKQE…KDNK), 8309–8324 (LKQE…KDNK), 8325–8340 (LKQE…KDDK), 8341–8356 (LKQE…KDDK), 8357–8371 (LKQE…EKDD), 8373–8388 (LKQE…KDDK), 8389–8404 (LKQE…KDDK), 8405–8420 (LKQE…KDDK), 8421–8436 (LKQE…KDDK), 8437–8452 (LKQE…KDDK), 8453–8468 (LKQE…KDDK), and 8469–8484 (LKQE…KGDK). Positions 7876-8273 (KLKKEKDNKL…EADAKLKKDK (398 aa)) form a coiled coil. Positions 8316–8490 (KLKKEKDNKL…KGDKLKLEDQ (175 aa)) form a coiled coil. Residues 8599-8611 (KHLKKKKKHHKKE) show a composition bias toward basic residues. The disordered stretch occupies residues 8599 to 8626 (KHLKKKKKHHKKEKIAVKETEQDEKTVS). Basic and acidic residues predominate over residues 8612-8626 (KIAVKETEQDEKTVS). The 92-residue stretch at 8950–9041 (KPRKAQLVAL…EIIEVNTLDY (92 aa)) folds into the Fibronectin type-III 1 domain. Disordered stretches follow at residues 9079 to 9104 (IEEH…LDSE), 9147 to 9436 (VQKI…AAAE), 9481 to 9609 (EEQS…ETES), 9702 to 10224 (ADAV…ESRI), 10239 to 10274 (ESDD…EDSP), 10539 to 11018 (QSAP…DSFT), 11030 to 11111 (EDAV…QKDQ), 11123 to 11213 (KKLA…QDKT), 11225 to 11387 (AKTT…SLTS), 11420 to 11592 (KGLN…NPEL), 11624 to 11825 (LTKK…SDNL), 11872 to 11955 (LSAH…TSLS), 11996 to 12054 (TNLI…LQKN), 12397 to 12418 (GRRV…RKKR), 12537 to 12974 (EESR…PAES), 13026 to 13045 (EAAK…TEVV), 13065 to 13261 (AAEA…LNDK), 13283 to 13514 (QAQA…EQLK), 13553 to 13574 (EEKQ…KLKL), and 13594 to 13874 (EKLA…RRTG). Basic residues predominate over residues 9084 to 9093 (KLKKKSKKSK). Composition is skewed to basic and acidic residues over residues 9172–9184 (VKKD…KKSL) and 9191–9202 (TKKEIQGKPEKK). Positions 9213–9231 (SSISETSETLTKDLTQTKQ) are enriched in polar residues. Over residues 9232 to 9267 (SEPEPAKRTTETSVQDEVKRKTETTSKSKQTTEEHP) the composition is skewed to basic and acidic residues. Low complexity predominate over residues 9273–9283 (SDSSISSTSDA). Positions 9295-9332 (EAQKVTEKPETAKLESKSKMTEDTTKESDNKETVDEKP) are enriched in basic and acidic residues. Low complexity predominate over residues 9346–9359 (STISETSETSAVES). A coiled-coil region spans residues 9371–9510 (AAVDKEKKQK…QTKAKAAEKQ (140 aa)). Composition is skewed to basic and acidic residues over residues 9373-9436 (VDKE…AAAE) and 9481-9521 (EEQS…KSNK). The segment covering 9547–9558 (SSISQKSDTSKT) has biased composition (low complexity). The stretch at 9577–9749 (TSKQKETDKK…QTVEEQAKLD (173 aa)) forms a coiled coil. 2 stretches are compositionally biased toward basic and acidic residues: residues 9578-9609 (SKQK…ETES) and 9702-9783 (ADAV…DEKP). Positions 9798-9809 (SISQKSVTSKTV) are enriched in polar residues. Basic and acidic residues-rich tracts occupy residues 9819–10004 (ETQK…DEKP), 10040–10149 (ETQK…KSEN), and 10162–10196 (VKSE…EPKE). Coiled-coil stretches lie at residues 9822–9995 (KVAD…TEEA) and 10046–10129 (EADK…TSKK). A compositionally biased stretch (basic residues) spans 10197-10206 (KKKIIKKKKD). The segment covering 10207–10224 (TTKPQEASKELSSDESRI) has biased composition (basic and acidic residues). A compositionally biased stretch (polar residues) spans 10239 to 10250 (ESDDLSTASTIK). The Fibronectin type-III 2 domain maps to 10461–10553 (KPTSLQVTST…DTIEATTQAE (93 aa)). Over residues 10566–10609 (EKVKEPVSKKPENTKESEGHKKRDRKESEDHDENNLGKSGKDEF) the composition is skewed to basic and acidic residues. Over residues 10612 to 10637 (SGESGTSNQNEESAQLNTSFTSTEQH) the composition is skewed to polar residues. Positions 10663-10680 (IDADVVEVEYDEQGDDIP) are enriched in acidic residues. The segment covering 10707-10716 (MAEKDSDAME) has biased composition (basic and acidic residues). Positions 10779-10790 (ADQTGMSIQDLN) are enriched in polar residues. Composition is skewed to basic and acidic residues over residues 10840–10852 (QLDK…DDKM) and 10863–10884 (KKPE…KESD). The span at 10961–10975 (LSTSEQVENASQNLG) shows a compositional bias: polar residues. Basic and acidic residues-rich tracts occupy residues 10999–11009 (IHGEAESKLGE), 11045–11055 (SAEKTSLEVRD), and 11076–11089 (SNRD…RDLN). Positions 11018-11064 (TLQDLYEELKAKEDAVEAGAETSNADQSAEKTSLEVRDMKKKMKKKQ) form a coiled coil. Polar residues predominate over residues 11090-11108 (TQHSNQTGEDESSTFNFGQ). Residues 11159–11173 (KKGEENEKTKFEAKH) are compositionally biased toward basic and acidic residues. The span at 11174-11187 (LGSSSASDSLAEST) shows a compositional bias: low complexity. Composition is skewed to basic and acidic residues over residues 11195–11211 (KGEV…KNQD), 11271–11280 (IPDKNRDSDK), and 11295–11318 (ESAE…EKTL). Over residues 11374–11387 (SKVTTSFADESLTS) the composition is skewed to polar residues. Composition is skewed to basic and acidic residues over residues 11440 to 11464 (KVKD…KDQK) and 11472 to 11485 (GSKD…EEKT). Over residues 11503 to 11515 (MTDQKNVQESQYA) the composition is skewed to polar residues. 3 stretches are compositionally biased toward basic and acidic residues: residues 11624–11635 (LTKKQDENDAKK), 11645–11669 (AKKD…DSRE), and 11722–11735 (VSEK…EKTV). Positions 11754 to 11767 (ESLNASSALSTTDV) are enriched in polar residues. Over residues 11916–11937 (AEDKYVESRKKTTLKKKPEQKQ) the composition is skewed to basic and acidic residues. Residues 12408-12428 (ELDDAKKRKKRRIKRVVERRN) are a coiled coil. Positions 12432–12547 (PRLTQLIPPR…ESRDDDKSVD (116 aa)) constitute an Ig-like 12 domain. Basic and acidic residues-rich tracts occupy residues 12537–12547 (EESRDDDKSVD), 12555–12567 (LEEK…DKSK), and 12609–12689 (VGAK…KKDA). Residues 12690–12701 (SQPSSSKESSPP) show a composition bias toward low complexity. The segment covering 12729 to 12740 (TMHSETNITTTI) has biased composition (polar residues). 3 stretches are compositionally biased toward basic and acidic residues: residues 12766–12839 (ESAK…KNKS), 12852–12865 (ETKK…EVPK), and 12889–12940 (PADD…DDKS). Positions 12797–12828 (KKSEKKDEVTAEKQSTEALIESKKKEVDESKI) form a coiled coil. The stretch at 12980 to 13103 (AEVNKAKKQK…LKLEEESAAK (124 aa)) forms a coiled coil. Composition is skewed to basic and acidic residues over residues 13065 to 13124 (AAEA…KAGE), 13133 to 13145 (PTSK…KDVG), 13176 to 13191 (TDSE…DEPT), 13203 to 13261 (EADK…LNDK), 13283 to 13327 (QAQA…EKQA), 13337 to 13354 (AVKK…EANK), and 13361 to 13416 (LKIE…DEKP). A coiled-coil region spans residues 13237–13380 (LDAQEKIKKV…SKQTVEEQAK (144 aa)). The segment covering 13431–13442 (SISQKSETSKTV) has biased composition (polar residues). A compositionally biased stretch (basic and acidic residues) spans 13452–13514 (ETQKVADAAR…KQKEKDEQLK (63 aa)). Positions 13455–13628 (KVADAARKQK…ETKSKQTEEA (174 aa)) form a coiled coil. The span at 13594–13637 (EKLAQEQSRLEDEAKKSAEKQKLESETKSKQTEEAPKESVDEKP) shows a compositional bias: basic and acidic residues. Residues 13651–13662 (SSISQKSKSAKS) are compositionally biased toward low complexity. The segment covering 13684–13696 (KVEQSPDESTSAT) has biased composition (polar residues). Residues 13697–13735 (IKRDPAQKTEEISKQDDGDEKKTTTDGKPPKPEDSEATP) are compositionally biased toward basic and acidic residues. Positions 13747–13760 (SDSVASDASLADVS) are enriched in low complexity. Positions 13761–13770 (KLSDDVEEKP) are enriched in basic and acidic residues. A compositionally biased stretch (polar residues) spans 13784–13793 (SVISETSSVD). 2 stretches are compositionally biased toward basic and acidic residues: residues 13795–13808 (IKPE…EKAE) and 13824–13843 (SEPK…DMMT). In terms of domain architecture, Ig-like 13 spans 13963 to 14036 (PVDFVKYLPR…RAKYEDSGKY (74 aa)). 3 Fibronectin type-III domains span residues 14153–14247 (APGD…TGSP), 14253–14348 (VEFP…TVEG), and 14350–14448 (VPEI…VLAD). Ig-like domains lie at 14451 to 14542 (PRVL…VGIS), 14550 to 14634 (SSFS…VIVN), and 14638 to 14727 (PHIL…LVFE). Cysteine 14568 and cysteine 14618 are disulfide-bonded. 2 Fibronectin type-III domains span residues 14826–14920 (APCD…TLES) and 14937–15027 (ILRT…LVPG). The segment at 15011–15180 (VSSPSEETNP…TGKETTEKKK (170 aa)) is disordered. 2 stretches are compositionally biased toward basic and acidic residues: residues 15034-15060 (KTEK…EKQV) and 15085-15117 (KVAE…ESRR). Residues 15118–15132 (GSLQASSDNESVTTT) show a composition bias toward polar residues. Basic and acidic residues predominate over residues 15133-15177 (SEKRSEAELEKNSEKSAEKKSTSADLEAADKAETEKSETGKETTE). Ig-like domains lie at 15180–15274 (KKVV…VSIA) and 15283–15371 (PKVE…IALR). 2 Fibronectin type-III domains span residues 15383–15475 (PTGP…LKKK) and 15503–15596 (QIGK…TTES). The segment at 15470 to 15503 (TTLKKKEETGKQKSEKSESDEKKSESDKVSELKQ) is disordered. Positions 15473–15503 (KKKEETGKQKSEKSESDEKKSESDKVSELKQ) are enriched in basic and acidic residues. 2 consecutive Ig-like domains span residues 15599 to 15687 (PAFT…CKLT) and 15692 to 15786 (PEIN…IQVT). One can recognise a Fibronectin type-III 10 domain in the interval 15791–15883 (APGKPAVEDQ…DESELVVVKN (93 aa)). The region spanning 15934–16189 (YIIHEELGKG…VQDALRHPWI (256 aa)) is the Protein kinase domain. ATP is bound by residues 15940 to 15948 (LGKGAYGTV) and lysine 15963. Aspartate 16055 serves as the catalytic Proton acceptor. Positions 16206 to 16264 (KMQPKLDKSGVPARQKRNFLSLKRWSDDLLPIGRLAKRGAIFRRLTMDGVFERNIAFDT) are autoinhibitory domain. Ig-like domains are found at residues 16268–16358 (PSVK…AKLS), 16500–16575 (GKQL…VAKN), 16605–16692 (PRFR…FSVV), and 16705–16789 (PKFL…KDFT). Disulfide bonds link cysteine 16290–cysteine 16342, cysteine 16508–cysteine 16571, cysteine 16627–cysteine 16677, and cysteine 16726–cysteine 16778. Positions 16805-16827 (LTPVRSRSRSRSRSPSVVGGEIQ) are disordered. Ig-like domains follow at residues 16829-16918 (PPVV…AIVV), 16932-17025 (PTFV…LTIS), and 17037-17126 (PYFI…TEVS). The interval 17121-17169 (QNTEVSVTKSKEVKEKKEKKKVEKKDEGKKKPGRPGLPRPSGASKTEQV) is disordered. Residues 17129–17150 (KSKEVKEKKEKKKVEKKDEGKK) are compositionally biased toward basic and acidic residues. The 92-residue stretch at 17154–17245 (RPGLPRPSGA…MTSTLKTASV (92 aa)) folds into the Fibronectin type-III 11 domain. 11 consecutive Ig-like domains span residues 17249 to 17336 (PQFT…CQVT), 17358 to 17447 (PTLQ…CNVA), 17457 to 17548 (PSFS…VMIA), 17570 to 17661 (PRFT…TQVI), 17676 to 17765 (PKFT…QATT), 17782 to 17873 (PRFV…LNVS), 18008 to 18097 (PKFM…SEID), 18121 to 18213 (PNFI…LQVS), 18224 to 18316 (PPLF…MQLD), 18329 to 18417 (PRVF…LELT), and 18429 to 18519 (PKFN…MILS). 2 cysteine pairs are disulfide-bonded: cysteine 17379-cysteine 17431 and cysteine 17478-cysteine 17530. Cysteine 17697 and cysteine 17754 form a disulfide bridge. A disulfide bridge links cysteine 18143 with cysteine 18195.

The protein belongs to the protein kinase superfamily. CAMK Ser/Thr protein kinase family. As to quaternary structure, interacts (via C-terminus) with myosin. Interacts with actin. The cofactor is Mg(2+). As to expression, expression is restricted to body wall, enteric and vulval muscles.

It localises to the cytoplasm. Its subcellular location is the myofibril. The protein resides in the sarcomere. It is found in the a band. The protein localises to the i band. It localises to the nucleus membrane. The catalysed reaction is L-seryl-[protein] + ATP = O-phospho-L-seryl-[protein] + ADP + H(+). It catalyses the reaction L-threonyl-[protein] + ATP = O-phospho-L-threonyl-[protein] + ADP + H(+). Serine/threonine-protein kinase. Key component in the assembly and functioning of muscles. By providing connections at the level of individual microfilaments, it contributes to the fine balance of forces between the two halves of the sarcomere. The size and extensibility of the cross-links are the main determinants of sarcomere extensibility properties of muscle. In non-muscle cells, seems to play a role in chromosome condensation and chromosome segregation during mitosis. Might link the lamina network to chromatin or nuclear actin, or both during interphase. The chain is Titin homolog from Caenorhabditis elegans.